Here is a 359-residue protein sequence, read N- to C-terminus: Phosphoserine aminotransferase (359 aa).

Arg41 lines the L-glutamate pocket. Pyridoxal 5'-phosphate contacts are provided by residues 75 to 76, Trp101, Thr152, Asp171, and Gln194; that span reads AS. Residue Lys195 is modified to N6-(pyridoxal phosphate)lysine. 236–237 is a binding site for pyridoxal 5'-phosphate; the sequence is NT.

The protein belongs to the class-V pyridoxal-phosphate-dependent aminotransferase family. SerC subfamily. As to quaternary structure, homodimer. The cofactor is pyridoxal 5'-phosphate.

The protein resides in the cytoplasm. It catalyses the reaction O-phospho-L-serine + 2-oxoglutarate = 3-phosphooxypyruvate + L-glutamate. It carries out the reaction 4-(phosphooxy)-L-threonine + 2-oxoglutarate = (R)-3-hydroxy-2-oxo-4-phosphooxybutanoate + L-glutamate. The protein operates within amino-acid biosynthesis; L-serine biosynthesis; L-serine from 3-phospho-D-glycerate: step 2/3. It participates in cofactor biosynthesis; pyridoxine 5'-phosphate biosynthesis; pyridoxine 5'-phosphate from D-erythrose 4-phosphate: step 3/5. Its function is as follows. Catalyzes the reversible conversion of 3-phosphohydroxypyruvate to phosphoserine and of 3-hydroxy-2-oxo-4-phosphonooxybutanoate to phosphohydroxythreonine. This chain is Phosphoserine aminotransferase, found in Acinetobacter baumannii (strain AB307-0294).